A 533-amino-acid polypeptide reads, in one-letter code: Putative adhesin P1-like protein MPN_409 (533 aa).

2 disordered regions span residues 15 to 45 (KNHR…GSRS) and 92 to 166 (SGWR…SITP). Residues 28–45 (TGAGSSSGTSTNTSGSRS) are compositionally biased toward low complexity. Residues 95 to 107 (RNDKNGQSDENHT) are compositionally biased toward basic and acidic residues.

This sequence belongs to the adhesin P1 family.

This is Putative adhesin P1-like protein MPN_409 from Mycoplasma pneumoniae (strain ATCC 29342 / M129 / Subtype 1) (Mycoplasmoides pneumoniae).